A 479-amino-acid polypeptide reads, in one-letter code: Glutamate--tRNA ligase (479 aa).

Residues proline 9–threonine 19 carry the 'HIGH' region motif. The 'KMSKS' region motif lies at lysine 243–arginine 247. Lysine 246 is an ATP binding site.

This sequence belongs to the class-I aminoacyl-tRNA synthetase family. Glutamate--tRNA ligase type 1 subfamily. In terms of assembly, monomer.

It localises to the cytoplasm. The catalysed reaction is tRNA(Glu) + L-glutamate + ATP = L-glutamyl-tRNA(Glu) + AMP + diphosphate. Its function is as follows. Catalyzes the attachment of glutamate to tRNA(Glu) in a two-step reaction: glutamate is first activated by ATP to form Glu-AMP and then transferred to the acceptor end of tRNA(Glu). The protein is Glutamate--tRNA ligase of Synechococcus sp. (strain JA-3-3Ab) (Cyanobacteria bacterium Yellowstone A-Prime).